The chain runs to 178 residues: MSGGKYVDSEGHLYTVPIREQGNIYKPNNKAMAEEINEKQVYDAHTKEIDLVNRDPKHLNDDVVKIDFEDVIAEPEGTHSFDGIWKASFTTFTVTKYWFYRLLSALFGIPMALIWGIYFAILSFLHIWAVVPCIKSFLIEIQCVSRVYSIYVHTFCDPFFEAVGKIFSSIRINMQKEI.

The residue at position 2 (Ser2) is an N-acetylserine. Phosphoserine is present on Ser2. Residues Ser2–Val94 form a required for homooligomerization region. At Ser2 to Ser104 the chain is on the cytoplasmic side. Lys5 carries the post-translational modification N6-acetyllysine; alternate. Lys5 participates in a covalent cross-link: Glycyl lysine isopeptide (Lys-Gly) (interchain with G-Cter in ubiquitin); alternate. Residue Tyr6 is modified to Phosphotyrosine. Ser9 is modified (phosphoserine). Phosphotyrosine; by ABL1 is present on Tyr14. Tyr25 is subject to Phosphotyrosine. Glycyl lysine isopeptide (Lys-Gly) (interchain with G-Cter in ubiquitin) cross-links involve residues Lys26, Lys30, Lys39, Lys47, and Lys57. The interaction with CAVIN3 stretch occupies residues Asp82–Val94. An intramembrane region (helical) is located at residues Ala105–Leu125. At His126–Ile178 the chain is on the cytoplasmic side. The interval Val131–Gln142 is interacts with SPRY1, SPRY2, SPRY3 and SPRY4. 3 S-palmitoyl cysteine lipidation sites follow: Cys133, Cys143, and Cys156. The interacts with SPRY1, SPRY2, and SPRY4 stretch occupies residues Ser149–Phe160. Residues Phe167–Ile178 are interacts with SPRY1, SPRY2, SPRY3 and SPRY4.

It belongs to the caveolin family. As to quaternary structure, homooligomer. Interacts with GLIPR2. Interacts with NOSTRIN. Interacts with SNAP25 and STX1A. Interacts (via the N-terminus) with DPP4; the interaction is direct. Interacts with CTNNB1, CDH1 and JUP. Interacts with PACSIN2; this interaction induces membrane tubulation. Interacts with SLC7A9. Interacts with BMX and BTK. Interacts with TGFBR1. Interacts with CAVIN3 (via leucine-zipper domain) in a cholesterol-sensitive manner. Interacts with CAVIN1. Interacts with EHD2 in a cholesterol-dependent manner. Forms a ternary complex with UBXN6 and VCP; mediates CAV1 targeting to lysosomes for degradation. Interacts with ABCG1; this interaction regulates ABCG1-mediated cholesterol efflux. Interacts with NEU3; this interaction enhances NEU3 sialidase activity within caveola. Interacts (via C-terminus) with SPRY1, SPRY2 (via C-terminus), SPRY3, and SPRY4. Interacts with IGFBP5; this interaction allows trafficking of IGFBP5 from the plasma membrane to the nucleus. Phosphorylated at Tyr-14 by ABL1 in response to oxidative stress. In terms of processing, ubiquitinated. Undergo monoubiquitination and multi- and/or polyubiquitination. Monoubiquitination of N-terminal lysines promotes integration in a ternary complex with UBXN6 and VCP which promotes oligomeric CAV1 targeting to lysosomes for degradation. Ubiquitinated by ZNRF1; leading to degradation and modulation of the TLR4-mediated immune response.

It localises to the golgi apparatus membrane. It is found in the cell membrane. The protein resides in the membrane. The protein localises to the caveola. Its subcellular location is the membrane raft. Its function is as follows. May act as a scaffolding protein within caveolar membranes. Forms a stable heterooligomeric complex with CAV2 that targets to lipid rafts and drives caveolae formation. Mediates the recruitment of CAVIN proteins (CAVIN1/2/3/4) to the caveolae. Interacts directly with G-protein alpha subunits and can functionally regulate their activity. Involved in the costimulatory signal essential for T-cell receptor (TCR)-mediated T-cell activation. Its binding to DPP4 induces T-cell proliferation and NF-kappa-B activation in a T-cell receptor/CD3-dependent manner. Recruits CTNNB1 to caveolar membranes and may regulate CTNNB1-mediated signaling through the Wnt pathway. Negatively regulates TGFB1-mediated activation of SMAD2/3 by mediating the internalization of TGFBR1 from membrane rafts leading to its subsequent degradation. Binds 20(S)-hydroxycholesterol (20(S)-OHC). The polypeptide is Caveolin-1 (CAV1) (Mustela putorius furo (European domestic ferret)).